The following is a 531-amino-acid chain: Non-muscle caldesmon (531 aa).

Residues 20-200 (AYQRNDDDEE…LKGGNLGENQ (181 aa)) form a myosin and calmodulin-binding region. A disordered region spans residues 21 to 379 (YQRNDDDEEE…KKPFKCFTPK (359 aa)). The segment covering 41-50 (QERLRQKQEE) has biased composition (basic and acidic residues). The segment covering 54 to 68 (GQVTDQVEAHVQNSA) has biased composition (polar residues). Over residues 93–116 (RLARREERRQKRLQEALERQKEFD) the composition is skewed to basic and acidic residues. The segment covering 120–133 (TDGSLSVPSRRMQN) has biased composition (polar residues). A Phosphoserine modification is found at Ser-123. Residues 143 to 156 (GEEKGESRSGRYEM) show a composition bias toward basic and acidic residues. Residues 162–172 (VITSYQKNSYQ) show a composition bias toward polar residues. Over residues 200-227 (QIKDEKIKKDKEPKEEVKNFLDRKKGFT) the composition is skewed to basic and acidic residues. Ser-249 carries the post-translational modification Phosphoserine; by CDK1. Composition is skewed to basic and acidic residues over residues 271–297 (AGKRLEELRRRRGETESEEFEKLKQKQ) and 305–372 (EELK…DKKP). The tract at residues 303–360 (ELEELKKKREERRKVLEEEEQRRKQEEADRKAREEEEKRRLKEEIERRRAEAAEKRQK) is tropomyosin-binding. At Ser-382 the chain carries Phosphoserine. Residue Lys-384 forms a Glycyl lysine isopeptide (Lys-Gly) (interchain with G-Cter in SUMO2) linkage. Residues 392 to 424 (LNKSVQKSGVKSTHQAAVVSKIDSRLEQYTNAI) form a strong actin-binding region. Ser-395 carries the phosphoserine modification. A tropomyosin-binding region spans residues 402–412 (KSTHQAAVVSK). The interval 454–460 (WEKGSVF) is calmodulin-binding. Residues 458 to 531 (SVFSSPSASG…VDKVTSPTKV (74 aa)) are disordered. A compositionally biased stretch (polar residues) spans 459-471 (VFSSPSASGTPNK). Ser-462 bears the Phosphoserine; by CDK1 mark. Position 468 is a phosphothreonine; by CDK1 (Thr-468). Phosphoserine; by CDK1 occurs at positions 491 and 497. The segment covering 503–522 (SDLRPGDVSGKRNLWEKQSV) has biased composition (basic and acidic residues). A weak actin-binding region spans residues 506-531 (RPGDVSGKRNLWEKQSVDKVTSPTKV). At Ser-527 the chain carries Phosphoserine; by CDK1.

The protein belongs to the caldesmon family. Post-translationally, in non-muscle cells, phosphorylation by CDK1 during mitosis causes caldesmon to dissociate from microfilaments. Phosphorylation reduces caldesmon binding to actin, myosin, and calmodulin as well as its inhibition of actomyosin ATPase activity. Phosphorylation also occurs in both quiescent and dividing smooth muscle cells with similar effects on the interaction with actin and calmodulin and on microfilaments reorganization. CDK1-mediated phosphorylation promotes Schwann cell migration during peripheral nerve regeneration. High-molecular-weight caldesmon (h-caldesmon) is predominantly expressed in smooth muscles, whereas low-molecular-weight caldesmon (l-caldesmon) is widely distributed in non-muscle tissues and cells. Not expressed in skeletal muscle or heart.

It is found in the cytoplasm. It localises to the cytoskeleton. Its subcellular location is the myofibril. The protein resides in the stress fiber. Actin- and myosin-binding protein implicated in the regulation of actomyosin interactions in smooth muscle and nonmuscle cells (could act as a bridge between myosin and actin filaments). Stimulates actin binding of tropomyosin which increases the stabilization of actin filament structure. In muscle tissues, inhibits the actomyosin ATPase by binding to F-actin. This inhibition is attenuated by calcium-calmodulin and is potentiated by tropomyosin. Interacts with actin, myosin, two molecules of tropomyosin and with calmodulin. Also plays an essential role during cellular mitosis and receptor capping. Involved in Schwann cell migration during peripheral nerve regeneration. The chain is Non-muscle caldesmon (Cald1) from Rattus norvegicus (Rat).